Consider the following 95-residue polypeptide: Small ribosomal subunit protein mS37 (95 aa).

One can recognise a CHCH domain in the interval 27–69; it reads ANKCLVLMSNLLQCWSSYGHMSPKCAGLVTELKSCTSESALGK. 2 short sequence motifs (cx9C motif) span residues 30 to 40 and 51 to 61; these read CLVLMSNLLQC and CAGLVTELKSC. 2 cysteine pairs are disulfide-bonded: Cys-30–Cys-61 and Cys-40–Cys-51.

It belongs to the mitochondrion-specific ribosomal protein mS37 family. Component of the mitochondrial small ribosomal subunit (mt-SSU). Mature yeast 74S mitochondrial ribosomes consist of a small (37S) and a large (54S) subunit. The 37S small subunit contains a 15S ribosomal RNA (15S mt-rRNA) and 34 different proteins. The 54S large subunit contains a 21S rRNA (21S mt-rRNA) and 46 different proteins.

Its subcellular location is the mitochondrion. It is found in the mitochondrion matrix. Component of the mitochondrial ribosome (mitoribosome), a dedicated translation machinery responsible for the synthesis of mitochondrial genome-encoded proteins, including at least some of the essential transmembrane subunits of the mitochondrial respiratory chain. The mitoribosomes are attached to the mitochondrial inner membrane and translation products are cotranslationally integrated into the membrane. This chain is Small ribosomal subunit protein mS37 (MRP10), found in Saccharomyces cerevisiae (strain ATCC 204508 / S288c) (Baker's yeast).